The primary structure comprises 351 residues: Phospho-N-acetylmuramoyl-pentapeptide-transferase (351 aa).

Transmembrane regions (helical) follow at residues 3–23 (GIIA…PPLI), 51–71 (TMGG…AHAV), 76–96 (PTVS…VGFL), 113–133 (GAKM…VTMF), 152–172 (FGPP…IVAT), 181–201 (GLDG…VIIG), 223–243 (PLDL…FLWF), 250–270 (IFMG…LAIT), 275–295 (LLLL…IIQV), and 329–349 (FWII…LEWM).

Belongs to the glycosyltransferase 4 family. MraY subfamily. Mg(2+) serves as cofactor.

The protein resides in the cell membrane. The catalysed reaction is UDP-N-acetyl-alpha-D-muramoyl-L-alanyl-gamma-D-glutamyl-meso-2,6-diaminopimeloyl-D-alanyl-D-alanine + di-trans,octa-cis-undecaprenyl phosphate = di-trans,octa-cis-undecaprenyl diphospho-N-acetyl-alpha-D-muramoyl-L-alanyl-D-glutamyl-meso-2,6-diaminopimeloyl-D-alanyl-D-alanine + UMP. It participates in cell wall biogenesis; peptidoglycan biosynthesis. Its function is as follows. Catalyzes the initial step of the lipid cycle reactions in the biosynthesis of the cell wall peptidoglycan: transfers peptidoglycan precursor phospho-MurNAc-pentapeptide from UDP-MurNAc-pentapeptide onto the lipid carrier undecaprenyl phosphate, yielding undecaprenyl-pyrophosphoryl-MurNAc-pentapeptide, known as lipid I. The sequence is that of Phospho-N-acetylmuramoyl-pentapeptide-transferase from Thermobifida fusca (strain YX).